The chain runs to 416 residues: 5-methylthioadenosine/S-adenosylhomocysteine deaminase 2 (416 aa).

2 residues coordinate Zn(2+): H58 and H60. Residues E86 and H178 each contribute to the substrate site. H205 provides a ligand contact to Zn(2+). The substrate site is built by E208 and D293. Residue D293 coordinates Zn(2+).

The protein belongs to the metallo-dependent hydrolases superfamily. MTA/SAH deaminase family. Zn(2+) serves as cofactor.

It carries out the reaction S-adenosyl-L-homocysteine + H2O + H(+) = S-inosyl-L-homocysteine + NH4(+). The enzyme catalyses S-methyl-5'-thioadenosine + H2O + H(+) = S-methyl-5'-thioinosine + NH4(+). Its function is as follows. Catalyzes the deamination of 5-methylthioadenosine and S-adenosyl-L-homocysteine into 5-methylthioinosine and S-inosyl-L-homocysteine, respectively. Is also able to deaminate adenosine. This Archaeoglobus fulgidus (strain ATCC 49558 / DSM 4304 / JCM 9628 / NBRC 100126 / VC-16) protein is 5-methylthioadenosine/S-adenosylhomocysteine deaminase 2.